A 70-amino-acid chain; its full sequence is Turripeptide OL179 (70 aa).

The first 21 residues, 1–21 (MMAKQVVVLLALLLLLPIVTA), serve as a signal peptide directing secretion. Residues 22–32 (SMGDASGRTGR) constitute a propeptide that is removed on maturation.

Expressed by the venom duct.

Its subcellular location is the secreted. Functionally, acts as a neurotoxin by inhibiting an ion channel. This is Turripeptide OL179 from Iotyrris olangoensis (Sea snail).